Reading from the N-terminus, the 1774-residue chain is 6-methylsalicylic acid synthase (1774 aa).

Residues 1-14 (MHSAATSTYPSGKT) show a composition bias toward polar residues. The disordered stretch occupies residues 1 to 21 (MHSAATSTYPSGKTSPAPVGT). One can recognise a Ketosynthase family 3 (KS3) domain in the interval 32 to 457 (SNDVAVVGMA…GTVSHAVIEE (426 aa)). The segment at 186–238 (RISYHLNLMGPSTAVDAACASSLVAIHHGVQAIRLGESKVAIVGGVNALCGPG) is acyltransferase. Active-site for beta-ketoacyl synthase activity residues include C204, H339, and H379. The interval 642-676 (NGITPQAVIGHSVGEIAASVVAGALSPAEGALIVT) is acetyl/malonyl transferases. The For malonyltransferase activity role is filled by S653. The tract at residues 926–1045 (HTLLGQRIPV…AYWDRKVAGS (120 aa)) is N-terminal hotdog fold. Residues 926 to 1202 (HTLLGQRIPV…FSEIEGTPGV (277 aa)) form the PKS/mFAS DH domain. Catalysis depends on H958, which acts as the Proton acceptor; for dehydratase activity. Residues 1059 to 1202 (VTKLADNFSI…FSEIEGTPGV (144 aa)) form a C-terminal hotdog fold region. The Proton donor; for dehydratase activity role is filled by D1123. The tract at residues 1403–1450 (GPRLLPRPEGTYLITGGLGVLGLEVADFLVEKGARRLLLISRRALPPR) is 2-oxoacyl reductase. 1419 to 1424 (GLGVLG) contributes to the NADP(+) binding site. Positions 1698 to 1772 (AYLDEKIRGC…HLAVWFAEKL (75 aa)) constitute a Carrier domain. S1732 carries the post-translational modification O-(pantetheine 4'-phosphoryl)serine.

Homomultimer.

It carries out the reaction 3 malonyl-CoA + acetyl-CoA + NADPH + 3 H(+) = 6-methylsalicylate + 3 CO2 + NADP(+) + 4 CoA + H2O. It functions in the pathway mycotoxin biosynthesis; patulin biosynthesis. Its function is as follows. This multifunctional enzyme is a polyketide synthase. It catalyzes a total of 11 steps by seven different component enzymes, in the biosynthesis of the antibiotic patulin. This Penicillium patulum (Penicillium griseofulvum) protein is 6-methylsalicylic acid synthase.